The primary structure comprises 126 residues: Large ribosomal subunit protein uL22 (126 aa).

It belongs to the universal ribosomal protein uL22 family. In terms of assembly, part of the 50S ribosomal subunit.

Its function is as follows. This protein binds specifically to 23S rRNA; its binding is stimulated by other ribosomal proteins, e.g. L4, L17, and L20. It is important during the early stages of 50S assembly. It makes multiple contacts with different domains of the 23S rRNA in the assembled 50S subunit and ribosome. In terms of biological role, the globular domain of the protein is located near the polypeptide exit tunnel on the outside of the subunit, while an extended beta-hairpin is found that lines the wall of the exit tunnel in the center of the 70S ribosome. The sequence is that of Large ribosomal subunit protein uL22 from Prochlorococcus marinus (strain NATL2A).